A 181-amino-acid polypeptide reads, in one-letter code: uncharacterized protein (181 aa).

A disordered region spans residues E25 to D47. The span at A32 to D47 shows a compositional bias: acidic residues. Residues I149–L169 traverse the membrane as a helical segment.

It is found in the cytoplasm. The protein localises to the membrane. This is an uncharacterized protein from Schizosaccharomyces pombe (strain 972 / ATCC 24843) (Fission yeast).